A 126-amino-acid chain; its full sequence is Hydrogenase maturation factor HypA (126 aa).

Position 2 (histidine 2) interacts with Ni(2+). Cysteine 78, cysteine 81, cysteine 97, and cysteine 100 together coordinate Zn(2+).

Belongs to the HypA/HybF family.

Involved in the maturation of [NiFe] hydrogenases. Required for nickel insertion into the metal center of the hydrogenase. The sequence is that of Hydrogenase maturation factor HypA from Methanococcus maripaludis (strain C6 / ATCC BAA-1332).